The following is a 333-amino-acid chain: Peroxisome biogenesis protein 2 (333 aa).

The Peroxisomal matrix segment spans residues 1-38 (MTPSTPADDAWIRSYQRLLPESQSLLASRRSVIPVAIS). Residues 39 to 65 (RVNQFDAARLDVEMSAMLKEQLVKVFT) traverse the membrane as a helical segment. Residues 66–71 (LMKPGM) are Cytoplasmic-facing. A helical membrane pass occupies residues 72–97 (LFQYEPELDAFLEFLIWRFSIWVDKP). Topologically, residues 98-131 (TPGNALMNLRYRDERGVVAQHLGKVRTGLEGPGL) are peroxisomal matrix. Residues 132 to 158 (TSPQKIWYCVASVGGQYLFSRLQSFSA) traverse the membrane as a helical segment. At 159-168 (FRRWGDSEQR) the chain is on the cytoplasmic side. Residues 169–199 (PLARRLWTLVQRIEGIYKAASFLNLLSFLYT) traverse the membrane as a helical segment. Over 200–226 (GRYRNLIEKALKARLVYRSPHMNRSVS) the chain is Peroxisomal matrix. A helical transmembrane segment spans residues 227–250 (FEYMNRQLVWNEFSEMLLLLLPLL). Residues 251–333 (NSSAVKNILS…IQREGVSSGK (83 aa)) lie on the Cytoplasmic side of the membrane. Residues Cys277, Cys280, Cys293, His295, Cys298, Cys301, Cys314, and Cys317 each coordinate Zn(2+). The segment at 277 to 318 (CPICQVDPAIPFIALPCQHRYCYYCIRTRCASAASFRCLRCN) adopts an RING-type zinc-finger fold.

The protein belongs to the pex2/pex10/pex12 family. In terms of assembly, component of the PEX2-PEX10-PEX12 retrotranslocation channel. Interacts with DSK2a and DSK2b. As to expression, expressed in roots, stems, leaves, flowers, pollen, ovules, seeds and siliques.

The protein resides in the peroxisome membrane. It carries out the reaction [E2 ubiquitin-conjugating enzyme]-S-ubiquitinyl-L-cysteine + [acceptor protein]-L-cysteine = [E2 ubiquitin-conjugating enzyme]-L-cysteine + [acceptor protein]-S-ubiquitinyl-L-cysteine.. It participates in protein modification; protein ubiquitination. Its function is as follows. E3 ubiquitin-protein ligase component of a retrotranslocation channel required for peroxisome organization by mediating export of the PEX5 receptor from peroxisomes to the cytosol, thereby promoting PEX5 recycling. The retrotranslocation channel is composed of PEX2, PEX10 and PEX12; each subunit contributing transmembrane segments that coassemble into an open channel that specifically allows the passage of PEX5 through the peroxisomal membrane. PEX2 also regulates peroxisome organization by acting as a E3 ubiquitin-protein ligase. PEX2 ubiquitinates PEX5 during its passage through the retrotranslocation channel: catalyzes monoubiquitination of PEX5 at 'Cys-6', a modification that acts as a signal for PEX5 extraction into the cytosol. The sequence is that of Peroxisome biogenesis protein 2 (PEX2) from Arabidopsis thaliana (Mouse-ear cress).